A 413-amino-acid polypeptide reads, in one-letter code: Acetate kinase (413 aa).

A Mg(2+)-binding site is contributed by asparagine 7. Lysine 14 contributes to the ATP binding site. Residue arginine 98 participates in substrate binding. Aspartate 157 serves as the catalytic Proton donor/acceptor. ATP-binding positions include 216-220 (HIGNG), 291-293 (DLR), and 339-343 (GVGEN). Glutamate 392 serves as a coordination point for Mg(2+).

It belongs to the acetokinase family. As to quaternary structure, homodimer. It depends on Mg(2+) as a cofactor. The cofactor is Mn(2+).

The protein resides in the cytoplasm. It carries out the reaction acetate + ATP = acetyl phosphate + ADP. It functions in the pathway metabolic intermediate biosynthesis; acetyl-CoA biosynthesis; acetyl-CoA from acetate: step 1/2. Functionally, catalyzes the formation of acetyl phosphate from acetate and ATP. Can also catalyze the reverse reaction. This is Acetate kinase from Synechocystis sp. (strain ATCC 27184 / PCC 6803 / Kazusa).